We begin with the raw amino-acid sequence, 315 residues long: beta-hydroxyaspartate dehydratase (315 aa).

N6-(pyridoxal phosphate)lysine is present on Lys53. Residues Asn80, 179 to 183 (GGGGM), and Thr303 each bind pyridoxal 5'-phosphate.

It depends on pyridoxal 5'-phosphate as a cofactor.

The catalysed reaction is (3S)-3-hydroxy-D-aspartate = iminosuccinate + H2O. Its function is as follows. Catalyzes the dehydration of (2R,3S)-beta-hydroxyaspartate ((3S)-3-hydroxy-D-aspartate) into iminosuccinate. Is essential for the growth of P.denitrificans in the presence of glycolate and glyoxylate since it functions in glyoxylate assimilation via the beta-hydroxyaspartate cycle (BHAC). The sequence is that of beta-hydroxyaspartate dehydratase from Paracoccus denitrificans (strain Pd 1222).